Reading from the N-terminus, the 546-residue chain is Cyclic GMP-AMP synthase-like receptor (546 aa).

A compositionally biased stretch (polar residues) spans 1–10 (MPVGSRQNRV). Disordered regions lie at residues 1–116 (MPVG…CASR) and 134–186 (AKQE…RLTN). The segment covering 35–45 (YTERKERKDVQ) has biased composition (basic and acidic residues). A compositionally biased stretch (low complexity) spans 69–80 (TSRTLRQTSQSR). Composition is skewed to basic and acidic residues over residues 82 to 95 (EVLE…DCKK) and 145 to 174 (KEGY…DKAT). Polar residues predominate over residues 175-186 (SHSTKGSFRLTN). Residues S243 and 255 to 257 (EFD) contribute to the ATP site. Positions 255, 257, and 374 each coordinate Mg(2+). Residues D374 and 428–435 (RTSFSLAE) each bind GTP. ATP contacts are provided by residues 432-435 (SLAE), K455, and 470-474 (SYHLK).

It belongs to the mab-21 family. Mg(2+) is required as a cofactor. The cofactor is Mn(2+).

It catalyses the reaction GTP + ATP = 2',3'-cGAMP + 2 diphosphate. The enzyme catalyses GTP + ATP = pppGp(2'-5')A + diphosphate. The catalysed reaction is pppGp(2'-5')A = 2',3'-cGAMP + diphosphate. Its function is as follows. Nucleotidyltransferase that catalyzes the formation of cyclic GMP-AMP (2',3'-cGAMP) from ATP and GTP and plays a key role in innate immunity. Directly binds some unknown ligand, activating the nucleotidyltransferase activity, leading to synthesis of 2',3'-cGAMP, a second messenger that binds to and activates Sting, thereby triggering the immune response via activation of the NF-kappa-B transcription factor. This Exaiptasia diaphana (Tropical sea anemone) protein is Cyclic GMP-AMP synthase-like receptor.